An 855-amino-acid chain; its full sequence is MSEARRDSTSSLQRKKPPWLKLDIPSAVPLTAEEPSFLQPLRRQAFLRSVSMPAETAHISSPHHELRRPVLQRQTSITQTIRRGTADWFGVSKDSDSTQKWQRKSIRHCSQRYGKLKPQVLRELDLPSQDNVSLTSTETPPPLYVGPCQLGMQKIIDPLARGRAFRVADDTAEGLSAPHTPVTPGAASLCSFSSSRSGFHRLPRRRKRESVAKMSFRAAAALMKGRSVRDGTFRRAQRRSFTPASFLEEDTTDFPDELDTSFFAREGILHEELSTYPDEVFESPSEAALKDWEKAPEQADLTGGALDRSELERSHLMLPLERGWRKQKEGAAAPQPKVRLRQEVVSTAGPRRGQRIAVPVRKLFAREKRPYGLGMVGRLTNRTYRKRIDSFVKRQIEDMDDHRPFFTYWLTFVHSLVTILAVCIYGIAPVGFSQHETVDSVLRNRGVYENVKYVQQENFWIGPSSEALIHLGAKFSPCMRQDPQVHSFIRSAREREKHSACCVRNDRSGCVQTSEEECSSTLAVWVKWPIHPSAPELAGHKRQFGSVCHQDPRVCDEPSSEDPHEWPEDITKWPICTKNSAGNHTNHPHMDCVITGRPCCIGTKGRCEITSREYCDFMRGYFHEEATLCSQVHCMDDVCGLLPFLNPEVPDQFYRLWLSLFLHAGILHCLVSICFQMTVLRDLEKLAGWHRIAIIYLLSGVTGNLASAIFLPYRAEVGPAGSQFGILACLFVELFQSWQILARPWRAFFKLLAVVLFLFTFGLLPWIDNFAHISGFISGLFLSFAFLPYISFGKFDLYRKRCQIIIFQVVFLGLLAGLVVLFYVYPVRCEWCEFLTCIPFTDKFCEKYELDAQLH.

Residues 1 to 411 lie on the Cytoplasmic side of the membrane; sequence MSEARRDSTS…HRPFFTYWLT (411 aa). Phosphoserine is present on residues serine 76 and serine 176. Phosphothreonine occurs at positions 180 and 183. Phosphoserine is present on serine 390. Residues 412-432 traverse the membrane as a helical segment; the sequence is FVHSLVTILAVCIYGIAPVGF. Residues 433–655 lie on the Lumenal side of the membrane; the sequence is SQHETVDSVL…NPEVPDQFYR (223 aa). Asparagine 583 is a glycosylation site (N-linked (GlcNAc...) asparagine). A helical membrane pass occupies residues 656–676; it reads LWLSLFLHAGILHCLVSICFQ. Over 677 to 691 the chain is Cytoplasmic; sequence MTVLRDLEKLAGWHR. The helical transmembrane segment at 692 to 712 threads the bilayer; the sequence is IAIIYLLSGVTGNLASAIFLP. The Lumenal segment spans residues 713–714; that stretch reads YR. The helical transmembrane segment at 715–735 threads the bilayer; the sequence is AEVGPAGSQFGILACLFVELF. Over 736-746 the chain is Cytoplasmic; that stretch reads QSWQILARPWR. A helical membrane pass occupies residues 747–767; the sequence is AFFKLLAVVLFLFTFGLLPWI. Residues 768-772 are Lumenal-facing; sequence DNFAH. Residues 773 to 793 form a helical membrane-spanning segment; the sequence is ISGFISGLFLSFAFLPYISFG. The Cytoplasmic portion of the chain corresponds to 794–803; the sequence is KFDLYRKRCQ. Residues 804–824 traverse the membrane as a helical segment; it reads IIIFQVVFLGLLAGLVVLFYV. At 825–855 the chain is on the lumenal side; the sequence is YPVRCEWCEFLTCIPFTDKFCEKYELDAQLH.

The protein belongs to the peptidase S54 family. As to quaternary structure, homodimer, or homooligomer. Interacts with TGFA and HBEGF. Interacts with EGF; may retain EGF in the endoplasmic reticulum and regulates its degradation through the endoplasmic reticulum-associated degradation (ERAD). Interacts (via cytoplasmic N-terminus) with FRMD8/iTAP; this interaction leads to mutual protein stabilization. Interacts with ADAM17/TACE. In terms of processing, N-glycosylated. As to expression, highly expressed in cerebellum, cerebrum, heart, skeletal muscle, placenta, pancreatic islet and testis. Detected at lower levels in colon, kidney, small intestine and lung.

The protein localises to the endoplasmic reticulum membrane. The protein resides in the golgi apparatus membrane. Functionally, regulates ADAM17 protease, a sheddase of the epidermal growth factor (EGF) receptor ligands and TNF, thereby plays a role in sleep, cell survival, proliferation, migration and inflammation. Does not exhibit any protease activity on its own. In Homo sapiens (Human), this protein is Inactive rhomboid protein 1 (RHBDF1).